The primary structure comprises 191 residues: Protein Ves (191 aa).

The protein belongs to the Ves family.

This is Protein Ves from Escherichia coli (strain SMS-3-5 / SECEC).